The chain runs to 577 residues: Proline--tRNA ligase (577 aa).

It belongs to the class-II aminoacyl-tRNA synthetase family. ProS type 1 subfamily. Homodimer.

The protein resides in the cytoplasm. It catalyses the reaction tRNA(Pro) + L-proline + ATP = L-prolyl-tRNA(Pro) + AMP + diphosphate. Its function is as follows. Catalyzes the attachment of proline to tRNA(Pro) in a two-step reaction: proline is first activated by ATP to form Pro-AMP and then transferred to the acceptor end of tRNA(Pro). As ProRS can inadvertently accommodate and process non-cognate amino acids such as alanine and cysteine, to avoid such errors it has two additional distinct editing activities against alanine. One activity is designated as 'pretransfer' editing and involves the tRNA(Pro)-independent hydrolysis of activated Ala-AMP. The other activity is designated 'posttransfer' editing and involves deacylation of mischarged Ala-tRNA(Pro). The misacylated Cys-tRNA(Pro) is not edited by ProRS. This is Proline--tRNA ligase from Helicobacter pylori (strain HPAG1).